The sequence spans 446 residues: Phosphoglucosamine mutase (446 aa).

Residue Ser103 is the Phosphoserine intermediate of the active site. 4 residues coordinate Mg(2+): Ser103, Asp242, Asp244, and Asp246. Ser103 carries the post-translational modification Phosphoserine.

It belongs to the phosphohexose mutase family. Requires Mg(2+) as cofactor. In terms of processing, activated by phosphorylation.

It carries out the reaction alpha-D-glucosamine 1-phosphate = D-glucosamine 6-phosphate. Catalyzes the conversion of glucosamine-6-phosphate to glucosamine-1-phosphate. The chain is Phosphoglucosamine mutase from Vibrio atlanticus (strain LGP32) (Vibrio splendidus (strain Mel32)).